A 573-amino-acid chain; its full sequence is Anti-Muellerian hormone type-2 receptor (573 aa).

An N-terminal signal peptide occupies residues 1–17; that stretch reads MLGSLGLWALLPTAVEA. Topologically, residues 18 to 149 are extracellular; it reads PPNRRTCVFF…APGESIWMAL (132 aa). Intrachain disulfides connect Cys55–Cys79 and Cys92–Cys109. Asn66 carries N-linked (GlcNAc...) asparagine glycosylation. The N-linked (GlcNAc...) asparagine glycan is linked to Asn119. A helical transmembrane segment spans residues 150–170; the sequence is VLLGLFLLLLLLLGSIILALL. The Cytoplasmic segment spans residues 171 to 573; that stretch reads QRKNYRVRGE…PQPACTLSPV (403 aa). The Protein kinase domain maps to 203-518; that stretch reads LCFSQVIREG…AHPQESHPFP (316 aa). ATP is bound by residues 209–217 and Lys230; that span reads IREGGHAVV. Asp333 functions as the Proton acceptor in the catalytic mechanism.

It belongs to the protein kinase superfamily. TKL Ser/Thr protein kinase family. TGFB receptor subfamily. As to quaternary structure, interacts with type I receptor ACVR1. Mg(2+) is required as a cofactor. Mn(2+) serves as cofactor.

It is found in the membrane. It carries out the reaction L-threonyl-[receptor-protein] + ATP = O-phospho-L-threonyl-[receptor-protein] + ADP + H(+). The catalysed reaction is L-seryl-[receptor-protein] + ATP = O-phospho-L-seryl-[receptor-protein] + ADP + H(+). In terms of biological role, on ligand binding, forms a receptor complex consisting of two type II and two type I transmembrane serine/threonine kinases. Type II receptors phosphorylate and activate type I receptors which autophosphorylate, then bind and activate SMAD transcriptional regulators. Receptor for anti-Muellerian hormone. This chain is Anti-Muellerian hormone type-2 receptor (AMHR2), found in Homo sapiens (Human).